The primary structure comprises 129 residues: Tumor necrosis factor receptor superfamily member 12A (129 aa).

Positions 1-27 are cleaved as a signal peptide; that stretch reads MASAWPRSLPQILVLGFGLVLMRAAAG. Topologically, residues 28-80 are extracellular; it reads EQAPGTSPCSSGSSWSADLDKCMDCASCPARPHSDFCLGCAAAPPAHFRLLWP. Intrachain disulfides connect Cys-36–Cys-49, Cys-52–Cys-67, and Cys-55–Cys-64. The TNFR-Cys; atypical repeat unit spans residues 36 to 67; sequence CSSGSSWSADLDKCMDCASCPARPHSDFCLGC. Residues 81–101 traverse the membrane as a helical segment; that stretch reads ILGGALSLVLVLALVSSFLVW. Residues 102-129 are Cytoplasmic-facing; that stretch reads RRCRRREKFTTPIEETGGEGCPGVALIQ.

In terms of assembly, associates with TRAF1 and TRAF2, and probably also with TRAF3. Highly expressed in fetal heart, intestine, kidney, liver, lung and skin, and in adult heart and ovary. Intermediate expression in adult kidney, lung and skin.

It is found in the membrane. Functionally, receptor for TNFSF12/TWEAK. Weak inducer of apoptosis in some cell types. Promotes angiogenesis and the proliferation of endothelial cells. May modulate cellular adhesion to matrix proteins. The sequence is that of Tumor necrosis factor receptor superfamily member 12A (Tnfrsf12a) from Mus musculus (Mouse).